The primary structure comprises 1651 residues: Roundabout homolog 1 (1651 aa).

A signal peptide spans 1–25 (MKWKHVPFLVMISLLSLSPNHLFLA). Topologically, residues 26–897 (QLIPDPEDVE…QQISDVVKQP (872 aa)) are extracellular. The disordered stretch occupies residues 33–57 (DVERGNDHGTPIPTSDNDDNSLGYT). Residues 44 to 56 (IPTSDNDDNSLGY) are compositionally biased toward polar residues. 5 consecutive Ig-like C2-type domains span residues 68 to 164 (PRIV…ASLE), 170 to 257 (DDFR…AELT), 262 to 346 (PSFV…ATLT), 351 to 446 (PHFV…LEVT), and 455 to 541 (PVIR…AYIE). A disulfide bridge connects residues cysteine 89 and cysteine 147. Asparagine 160 carries N-linked (GlcNAc...) asparagine glycosylation. 3 disulfide bridges follow: cysteine 191/cysteine 240, cysteine 283/cysteine 330, and cysteine 372/cysteine 428. Asparagine 463 is a glycosylation site (N-linked (GlcNAc...) asparagine). Cysteines 476 and 525 form a disulfide. 3 Fibronectin type-III domains span residues 563 to 657 (APSK…TQDV), 676 to 773 (AVLH…TLEE), and 778 to 874 (PPQG…LDAH). 3 N-linked (GlcNAc...) asparagine glycosylation sites follow: asparagine 790, asparagine 820, and asparagine 827. A helical membrane pass occupies residues 898-918 (AFIAGIGAACWIILMVFSIWL). At 919 to 1651 (YRHRKKRNGL…NNEELEETES (733 aa)) the chain is on the cytoplasmic side. Serine 940 is modified (phosphoserine). Position 948 is a phosphothreonine (threonine 948). Tyrosine 1038 carries the phosphotyrosine; by ABL; in vitro modification. The residue at position 1055 (serine 1055) is a Phosphoserine. Phosphotyrosine; by ABL; in vitro occurs at positions 1073 and 1114. Disordered stretches follow at residues 1124–1202 (KDYR…SEEY), 1224–1337 (YLQQ…ADME), 1352–1397 (EQTP…DGSF), and 1420–1651 (RRQM…ETES). Over residues 1137-1146 (PYNQSYDQNT) the composition is skewed to polar residues. Low complexity predominate over residues 1147-1163 (GGSYNSSDRGSSTSGSQ). Positions 1186–1196 (LPPPPAHPPPH) are enriched in pro residues. The residue at position 1240 (threonine 1240) is a Phosphothreonine. Residues 1255 to 1269 (YSHQSTATLTPSPQE) are compositionally biased toward polar residues. Residues 1281–1293 (ETGHMQHQPDRRR) show a composition bias toward basic and acidic residues. The span at 1296 to 1307 (VSPPPPPRPISP) shows a compositional bias: pro residues. A Phosphoserine modification is found at serine 1297. Residues 1322–1336 (MDTDAPEEEEDEADM) are compositionally biased toward acidic residues. Residues 1384–1397 (SSGRSSVSSSDGSF) show a composition bias toward low complexity. Positions 1438-1451 (PRPTSPVSTDSNMS) are enriched in polar residues. Residues 1459–1470 (RPAKKLKHQPGH) are compositionally biased toward basic residues. A compositionally biased stretch (pro residues) spans 1480-1490 (LPPPPVPPPAI). 2 stretches are compositionally biased toward basic and acidic residues: residues 1516–1541 (ARTD…RQVV) and 1549–1573 (DPRE…RDLP). A compositionally biased stretch (polar residues) spans 1592–1601 (FPTSNNPRDP). Residues 1602–1614 (SSSSSMSSRGSGS) are compositionally biased toward low complexity. The segment covering 1642-1651 (NNEELEETES) has biased composition (acidic residues).

The protein belongs to the immunoglobulin superfamily. ROBO family. In terms of assembly, homodimer. Dimerization is mediated by the extracellular domain and is independent of SLIT liganding. Interacts with SLIT1. Interacts with SLIT2. Interacts with FLRT3. Interacts with MYO9B (via Rho-GAP domain). Ubiquitinated. May be deubiquitinated by USP33. Widely expressed, with exception of kidney.

It is found in the cell membrane. It localises to the cell projection. The protein resides in the axon. Its subcellular location is the endoplasmic reticulum-Golgi intermediate compartment membrane. Its function is as follows. Receptor for SLIT1 and SLIT2 that mediates cellular responses to molecular guidance cues in cellular migration, including axonal navigation at the ventral midline of the neural tube and projection of axons to different regions during neuronal development. Interaction with the intracellular domain of FLRT3 mediates axon attraction towards cells expressing NTN1. In axon growth cones, the silencing of the attractive effect of NTN1 by SLIT2 may require the formation of a ROBO1-DCC complex. Plays a role in the regulation of cell migration via its interaction with MYO9B; inhibits MYO9B-mediated stimulation of RHOA GTPase activity, and thereby leads to increased levels of active, GTP-bound RHOA. May be required for lung development. This chain is Roundabout homolog 1 (ROBO1), found in Homo sapiens (Human).